We begin with the raw amino-acid sequence, 326 residues long: ATP-dependent 6-phosphofructokinase 2 (326 aa).

Glycine 14 serves as a coordination point for ATP. 24 to 28 (RAVTR) contacts ADP. ATP contacts are provided by residues 75–76 (RC) and 105–108 (GDGS). Aspartate 106 is a binding site for Mg(2+). Residue 129 to 131 (TID) coordinates substrate. The Proton acceptor role is filled by aspartate 131. Arginine 158 contributes to the ADP binding site. Substrate is bound by residues arginine 166 and 173-175 (MGR). ADP contacts are provided by residues 189-191 (GAE), lysine 215, and 217-219 (KNS). Substrate is bound by residues glutamate 226, arginine 250, and 256 to 259 (HLQR).

This sequence belongs to the phosphofructokinase type A (PFKA) family. ATP-dependent PFK group I subfamily. Prokaryotic clade 'B1' sub-subfamily. In terms of assembly, homotetramer. Requires Mg(2+) as cofactor.

Its subcellular location is the cytoplasm. It catalyses the reaction beta-D-fructose 6-phosphate + ATP = beta-D-fructose 1,6-bisphosphate + ADP + H(+). It functions in the pathway carbohydrate degradation; glycolysis; D-glyceraldehyde 3-phosphate and glycerone phosphate from D-glucose: step 3/4. Allosterically activated by ADP and other diphosphonucleosides, and allosterically inhibited by phosphoenolpyruvate. Functionally, catalyzes the phosphorylation of D-fructose 6-phosphate to fructose 1,6-bisphosphate by ATP, the first committing step of glycolysis. In Bacteroides thetaiotaomicron (strain ATCC 29148 / DSM 2079 / JCM 5827 / CCUG 10774 / NCTC 10582 / VPI-5482 / E50), this protein is ATP-dependent 6-phosphofructokinase 2.